Here is a 249-residue protein sequence, read N- to C-terminus: MRILVSNDDGFHAEGIQVLATELRKIAEVIVVAPDRNRSAASSSLTLVEPLRPRHLDNGDYCVNGTPADCVYLALNGFLSGQVDLVVSGINAGCNMGDDTIYSGTLAAALEGRHLGLPAIAVSLDGRQHYETAARVVCDLIPKLHHQLLNPREIININVPDLPFEELKGYKVCRLGYRASSAEVIKQKDPRDETIYWIGPSALPEDESEGTDFYAVKNGYVSITPIQADLTAYHSLLSLQNWLEQEFTK.

A divalent metal cation contacts are provided by Asp-8, Asp-9, Ser-39, and Asn-91.

The protein belongs to the SurE nucleotidase family. It depends on a divalent metal cation as a cofactor.

The protein resides in the cytoplasm. The catalysed reaction is a ribonucleoside 5'-phosphate + H2O = a ribonucleoside + phosphate. Functionally, nucleotidase that shows phosphatase activity on nucleoside 5'-monophosphates. The sequence is that of 5'-nucleotidase SurE from Haemophilus influenzae (strain PittGG).